The primary structure comprises 304 residues: Carbonic anhydrase 5A, mitochondrial (304 aa).

The N-terminal 34 residues, 1–34 (MLRAKMLGRGPYKPLAILRHMGPLCATRPQHWRF), are a transit peptide targeting the mitochondrion. One can recognise an Alpha-carbonic anhydrase domain in the interval 35 to 295 (QHSYAEKHSN…LRGRNVRSSF (261 aa)). Zn(2+) is bound by residues H129, H131, and H154.

Belongs to the alpha-carbonic anhydrase family. Requires Zn(2+) as cofactor. In terms of tissue distribution, high in liver, also detected in heart, lung, kidney, spleen and intestine.

The protein localises to the mitochondrion. The catalysed reaction is hydrogencarbonate + H(+) = CO2 + H2O. Functionally, mitochondrial carbonic anhydrase that catalyzes the reversible conversion of carbon dioxide to bicarbonate/HCO3. Mitochondria are impermeable to HCO3, and thus this intramitochondrial carbonic anhydrase is pivotal in providing HCO3 for multiple mitochondrial enzymes that catalyze the formation of essential metabolites of intermediary metabolism in the urea and Krebs cycles. This chain is Carbonic anhydrase 5A, mitochondrial, found in Rattus norvegicus (Rat).